The chain runs to 105 residues: uncharacterized protein (105 aa).

Transmembrane regions (helical) follow at residues 3 to 23 (ISPL…QALF), 41 to 61 (DLVN…ALVS), and 63 to 83 (AFPV…TFIY).

It is found in the cell membrane. This is an uncharacterized protein from Methanocaldococcus jannaschii (strain ATCC 43067 / DSM 2661 / JAL-1 / JCM 10045 / NBRC 100440) (Methanococcus jannaschii).